A 173-amino-acid polypeptide reads, in one-letter code: Photosystem I assembly protein Ycf3 (173 aa).

TPR repeat units follow at residues 36–69 (AFAY…EQDD), 73–106 (SYIL…NPRL), and 121–154 (GEQS…APNN).

This sequence belongs to the Ycf3 family.

Its subcellular location is the cellular thylakoid membrane. Functionally, essential for the assembly of the photosystem I (PSI) complex. May act as a chaperone-like factor to guide the assembly of the PSI subunits. The chain is Photosystem I assembly protein Ycf3 from Synechococcus sp. (strain JA-3-3Ab) (Cyanobacteria bacterium Yellowstone A-Prime).